A 114-amino-acid polypeptide reads, in one-letter code: Hemerythrin (114 aa).

Fe cation is bound by residues His26, His55, Glu59, His74, His78, His102, and Asp107.

This sequence belongs to the hemerythrin family. Homooctamer.

Functionally, hemerythrin is a respiratory protein in blood cells of certain marine worms. The oxygen-binding site in each chain contains two iron atoms. The chain is Hemerythrin from Phascolopsis gouldii (Peanut worm).